A 499-amino-acid polypeptide reads, in one-letter code: Probable dipeptidase B (499 aa).

Cysteine 26 is a catalytic residue.

This sequence belongs to the peptidase C69 family.

The enzyme catalyses an L-aminoacyl-L-amino acid + H2O = 2 an L-alpha-amino acid. In Streptococcus pyogenes serotype M18 (strain MGAS8232), this protein is Probable dipeptidase B (pepDB).